An 899-amino-acid chain; its full sequence is Protein suppressor of hairy wing (899 aa).

Disordered regions lie at residues 1–33 (MSAQ…RTGT), 45–127 (AAVA…KKMD), and 171–206 (AKEN…AKRR). Basic and acidic residues predominate over residues 21–31 (SDGDKPKEKRT). A compositionally biased stretch (low complexity) spans 45–55 (AAVASKGASVS). Composition is skewed to polar residues over residues 67-83 (KILN…STKG) and 102-111 (RSSAPASSAV). Residues 183 to 198 (VDEDDDDDDDDEDEGV) show a composition bias toward acidic residues. A C2H2-type 1; atypical zinc finger spans residues 218–240 (HVCGKCYKTFRRVKSLKKHLEFC). The segment at 288–311 (INCPDCPKSFKTQTSYERHIFITH) adopts a C2H2-type 2 zinc-finger fold. A C2H2-type 3; atypical zinc finger spans residues 318–340 (YPCSICNAKLRSGALLKLHEQQH). 9 consecutive C2H2-type zinc fingers follow at residues 347 to 365 (FACK…LKCH), 379 to 401 (MSCK…LKQH), 412 to 434 (YMCH…IRTH), 440 to 462 (FDCD…RRYH), 468 to 490 (YTCT…MKRH), 496 to 518 (HKCN…SKTH), 522 to 544 (YACS…VKDH), 552 to 576 (FACT…AGDH), and 594 to 617 (TDCA…RSVH). Disordered regions lie at residues 646 to 665 (EQKE…GSLI), 702 to 734 (PLEG…VVKK), and 865 to 899 (GDED…ESEA). Over residues 874 to 899 (ETDKGKDREADNTDTDTREDAVESEA) the composition is skewed to basic and acidic residues.

It is found in the nucleus. Functionally, component of the gypsy chromatin insulator complex which is required for the function of the gypsy chromatin insulator and other endogenous chromatin insulators. Chromatin insulators are regulatory elements which establish independent domains of transcriptional activity within eukaryotic genomes. Insulators have two defining properties; they can block the communication between an enhancer and a promoter when placed between them and can also buffer transgenes from position effect variegation (PEV). Insulators are proposed to structure the chromatin fiber into independent domains of differing transcriptional potential by promoting the formation of distinct chromatin loops. This chromatin looping may involve the formation of insulator bodies, where homotypic interactions between individual subunits of the insulator complex could promote the clustering of widely spaced insulators at the nuclear periphery. Within the gypsy insulator complex, this protein binds specifically to a region of the gypsy element located 3' of the 5' long terminal repeat (LTR), and may also mediate interaction with other endogenous insulators at sites distinct from those recognized by Cp190. Cooperates with pita and cliff to recruit Cp190 and regulate insulator function at the front-ultraabdominal (Fub) boundary. The sequence is that of Protein suppressor of hairy wing (su(Hw)) from Drosophila virilis (Fruit fly).